The following is a 139-amino-acid chain: FLYWCH family member 2 (139 aa).

2 disordered regions span residues 1 to 36 (MPQP…PRKP) and 86 to 139 (EAQR…STSP). Residues 98–107 (PEQKRSKQNL) show a composition bias toward basic and acidic residues. The segment covering 120-130 (VSSSSSEETTV) has biased composition (low complexity).

The chain is FLYWCH family member 2 (Flywch2) from Mus musculus (Mouse).